A 124-amino-acid chain; its full sequence is UPF0231 protein Shewmr7_3366 (124 aa).

This sequence belongs to the UPF0231 family.

The chain is UPF0231 protein Shewmr7_3366 from Shewanella sp. (strain MR-7).